The sequence spans 802 residues: Phenylalanine--tRNA ligase beta subunit (802 aa).

Residues 39 to 150 (AKALKPFTIA…ADAPIGAAYA (112 aa)) form the tRNA-binding domain. Residues 400-475 (GDDRVIDFPV…RIYGVDKVPM (76 aa)) enclose the B5 domain. 4 residues coordinate Mg(2+): aspartate 453, aspartate 459, glutamate 462, and glutamate 463. An FDX-ACB domain is found at 708 to 801 (SAFQPVSRDF…VTKKTGGTLR (94 aa)).

Belongs to the phenylalanyl-tRNA synthetase beta subunit family. Type 1 subfamily. As to quaternary structure, tetramer of two alpha and two beta subunits. Requires Mg(2+) as cofactor.

Its subcellular location is the cytoplasm. The catalysed reaction is tRNA(Phe) + L-phenylalanine + ATP = L-phenylalanyl-tRNA(Phe) + AMP + diphosphate + H(+). This Bradyrhizobium diazoefficiens (strain JCM 10833 / BCRC 13528 / IAM 13628 / NBRC 14792 / USDA 110) protein is Phenylalanine--tRNA ligase beta subunit.